The sequence spans 306 residues: ClpXP adapter protein SpxH (306 aa).

It belongs to the SpxH family. Interacts with Spx.

It is found in the cytoplasm. Its function is as follows. Adapter protein required for efficient degradation of Spx by ClpXP under non-stress conditions. Interaction with Spx stabilizes Spx and exposes the C-terminus of Spx for recognition and proteolysis by ClpXP. The polypeptide is ClpXP adapter protein SpxH (Halalkalibacterium halodurans (strain ATCC BAA-125 / DSM 18197 / FERM 7344 / JCM 9153 / C-125) (Bacillus halodurans)).